Reading from the N-terminus, the 430-residue chain is Bone morphogenetic protein 7 (430 aa).

The signal sequence occupies residues 1–29 (MHVRSLRAAAPHSFVALWAPLFLLRSALA). Positions 30–291 (DFSLDNEVHS…ATEVHLRSIR (262 aa)) are excised as a propeptide. 4 N-linked (GlcNAc...) asparagine glycosylation sites follow: Asn186, Asn301, Asn320, and Asn371. The interval 290 to 310 (IRSTGGKQRSQNRSKTPKNQE) is disordered. Cystine bridges form between Cys329/Cys395, Cys358/Cys427, and Cys362/Cys429.

The protein belongs to the TGF-beta family. As to quaternary structure, homodimer; disulfide-linked. Interacts with SOSTDC1. Interacts with TWSG1. Interacts with FBN1 (via N-terminal domain) and FBN2. Interacts with type I receptor ACVR1. Interacts with type II receptor ACVR2A. Interacts with NOG; this interaction inhibits canonical BMP signaling. Interacts with SCUBE3. Interacts with ERFE; the interaction inhibits BMP-induced transcription of HAMP. Interacts with TGFBR3.

It is found in the secreted. In terms of biological role, growth factor of the TGF-beta superfamily that plays important role in various biological processes, including embryogenesis, hematopoiesis, neurogenesis and skeletal morphogenesis. Initiates the canonical BMP signaling cascade by associating with type I receptor ACVR1 and type II receptor ACVR2A. Once all three components are bound together in a complex at the cell surface, ACVR2A phosphorylates and activates ACVR1. In turn, ACVR1 propagates signal by phosphorylating SMAD1/5/8 that travel to the nucleus and act as activators and repressors of transcription of target genes. For specific functions such as growth cone collapse in developing spinal neurons and chemotaxis of monocytes, also uses BMPR2 as type II receptor. Can also signal through non-canonical pathways such as P38 MAP kinase signaling cascade that promotes brown adipocyte differentiation through activation of target genes, including members of the SOX family of transcription factors. Promotes the expression of HAMP, this is repressed by its interaction with ERFE. The protein is Bone morphogenetic protein 7 (Bmp7) of Mus musculus (Mouse).